Consider the following 748-residue polypeptide: MEALSINAPTQASTLPSGLQISKEVEKRYNVVRSVGEQCIHDDELKDLLAKKAAPVCYDGFEPSGRMHIAQGLMKIMNVNKLTSAGCRVKIWIADWFAYMNNKLGGDLKKIRVVGEYFKEIFQAAGMNSENVEFLWSSDEINAKGDEYWPLVMDIACRNSLAQIKRCMPIMGLSENEELSAAHILYVCMQCADTFFLEADICQLGMDQQTVNLLARDYCDVVKRENKPVILSHHMLPGLQQGQKKMSKSDPSSAIFMEDEEAEVNVKIKKAYCPPDIVEGNPCLEYVKHIILPWFSEFTVERDEKYGGNRTFKSFEDITTDYESGQLHPKDLKDALSKALNKILQPVRDHFKTNSRAKNLLKQVKGYKVTRVIPTASSTKEEDLSINTSASSSAAGLQMSEEAEMKYKIVRSIGEECIQEDELKNLLAKKPAPICYDGFEPSGRMHIAQGVMKVTNVNKLTSAGCQVKIWIADWFAQLNNKLGGDLERIRVVGEYFKEIWQAGGMNNDKVEFLWASDEINGKGSKYWPLVMDIARRNNLRRILRCGQIMGRSETEVLSAAQILYPCMQCADIFLLEADICQLGMDQRKVNMLAREYCADIKRKNKPIILSHHMLPGLQQGQEKMSKSDPSSAIFMEDEEADVNEKISKAYCPPKTVEGNPCLEYVKYIVLPRFNEFKVESEKNGGNKTFNSFEDIVADYETGELHPEDLKKALMKALNITLQPVRDHFKTNERAKNLLEQVKAFRVTR.

N-acetylmethionine is present on methionine 1. The 'HIGH' region signature appears at 441-449; it reads PSGRMHIAQ. L-tyrosine contacts are provided by tyrosine 564, glutamine 568, aspartate 571, and glutamine 586. The short motif at 623-627 is the 'KMSKS' region element; the sequence is KMSKS. Lysine 626 provides a ligand contact to ATP.

It belongs to the class-I aminoacyl-tRNA synthetase family.

It is found in the cytoplasm. Its subcellular location is the cytosol. The enzyme catalyses tRNA(Tyr) + L-tyrosine + ATP = L-tyrosyl-tRNA(Tyr) + AMP + diphosphate + H(+). Catalyzes the attachment of tyrosine to tRNA(Tyr) in a two-step reaction: tyrosine is first activated by ATP to form Tyr-AMP and then transferred to the acceptor end of tRNA(Tyr). The protein is Tyrosine--tRNA ligase 2, cytoplasmic of Arabidopsis thaliana (Mouse-ear cress).